The following is a 509-amino-acid chain: Maturase K (509 aa).

This sequence belongs to the intron maturase 2 family. MatK subfamily.

The protein localises to the plastid. The protein resides in the chloroplast. Functionally, usually encoded in the trnK tRNA gene intron. Probably assists in splicing its own and other chloroplast group II introns. The protein is Maturase K of Pereskia aculeata (Barbados gooseberry).